The primary structure comprises 155 residues: Endoribonuclease YbeY (155 aa).

Zn(2+) contacts are provided by histidine 120, histidine 124, and histidine 130.

It belongs to the endoribonuclease YbeY family. The cofactor is Zn(2+).

The protein localises to the cytoplasm. Single strand-specific metallo-endoribonuclease involved in late-stage 70S ribosome quality control and in maturation of the 3' terminus of the 16S rRNA. This Borreliella burgdorferi (strain ATCC 35210 / DSM 4680 / CIP 102532 / B31) (Borrelia burgdorferi) protein is Endoribonuclease YbeY.